The chain runs to 586 residues: Cytosolic Fe-S cluster assembly factor NAR1 (586 aa).

Positions 20, 73, 76, 79, 220, 275, 462, and 466 each coordinate [4Fe-4S] cluster.

The protein belongs to the NARF family.

In terms of biological role, component of the cytosolic Fe/S protein assembly machinery. Required for maturation of extramitochondrial Fe/S proteins. May play a role in the transfer of pre-assembled Fe/S clusters to target apoproteins. The polypeptide is Cytosolic Fe-S cluster assembly factor NAR1 (NAR1) (Chaetomium globosum (strain ATCC 6205 / CBS 148.51 / DSM 1962 / NBRC 6347 / NRRL 1970) (Soil fungus)).